The chain runs to 291 residues: Urease accessory protein UreD (291 aa).

It belongs to the UreD family. As to quaternary structure, ureD, UreF and UreG form a complex that acts as a GTP-hydrolysis-dependent molecular chaperone, activating the urease apoprotein by helping to assemble the nickel containing metallocenter of UreC. The UreE protein probably delivers the nickel.

It is found in the cytoplasm. Required for maturation of urease via the functional incorporation of the urease nickel metallocenter. This Acinetobacter baumannii (strain SDF) protein is Urease accessory protein UreD.